Reading from the N-terminus, the 389-residue chain is Metal tolerance protein 2 (389 aa).

At Met-1–Arg-81 the chain is on the cytoplasmic side. Residues Leu-82 to Gly-102 traverse the membrane as a helical segment. The Vacuolar portion of the chain corresponds to Ser-103–Thr-104. A helical transmembrane segment spans residues Ala-105–Leu-125. Over Ser-126 to Leu-148 the chain is Cytoplasmic. Residues Gly-149–Phe-169 traverse the membrane as a helical segment. The Vacuolar portion of the chain corresponds to Asp-170 to His-206. The helical transmembrane segment at Pro-207 to Ile-227 threads the bilayer. The Cytoplasmic portion of the chain corresponds to Thr-228 to Asp-250. A helical transmembrane segment spans residues Ala-251–Leu-271. Residues Asp-272–Ala-275 lie on the Vacuolar side of the membrane. Residues Gly-276 to Leu-296 traverse the membrane as a helical segment. Residues Glu-297–Leu-389 lie on the Cytoplasmic side of the membrane.

This sequence belongs to the cation diffusion facilitator (CDF) transporter (TC 2.A.4) family. SLC30A subfamily.

The protein resides in the vacuole membrane. Involved in sequestration of excess metal in the cytoplasm into vacuoles to maintain metal homeostasis. The sequence is that of Metal tolerance protein 2 (MTP2) from Oryza sativa subsp. japonica (Rice).